The primary structure comprises 175 residues: Large ribosomal subunit protein bL9 (175 aa).

Belongs to the bacterial ribosomal protein bL9 family.

In terms of biological role, binds to the 23S rRNA. In Orientia tsutsugamushi (strain Boryong) (Rickettsia tsutsugamushi), this protein is Large ribosomal subunit protein bL9.